The primary structure comprises 198 residues: Peptidyl-tRNA hydrolase (198 aa).

Y16 contributes to the tRNA binding site. The active-site Proton acceptor is H21. The tRNA site is built by Y67, N69, and N115.

The protein belongs to the PTH family. As to quaternary structure, monomer.

It is found in the cytoplasm. The catalysed reaction is an N-acyl-L-alpha-aminoacyl-tRNA + H2O = an N-acyl-L-amino acid + a tRNA + H(+). In terms of biological role, hydrolyzes ribosome-free peptidyl-tRNAs (with 1 or more amino acids incorporated), which drop off the ribosome during protein synthesis, or as a result of ribosome stalling. Functionally, catalyzes the release of premature peptidyl moieties from peptidyl-tRNA molecules trapped in stalled 50S ribosomal subunits, and thus maintains levels of free tRNAs and 50S ribosomes. The protein is Peptidyl-tRNA hydrolase of Gloeobacter violaceus (strain ATCC 29082 / PCC 7421).